A 291-amino-acid polypeptide reads, in one-letter code: MGGRYDRNTFDEQDEVNPFANPGSVPAASNSRLSPLPPEPAGFGYGRTVDIPLDRPGSGAQDLKKKEKELQAKEADLRRREQDLKRKQDAAARAGIVIEAKNWPTFFPLIHHDIANEILVRLQRLQYIAFATYLGLVLALFWNIIAVTTAWIKGEGVTIWLLAVIYFISGVPGGYVLWYRPLYRAFRSDSAFNFGWFFLFYMLHILFCLFAAVAPPIVFKGKSLAGILPAIDVLSAQALVGIFYFIGFGLFCLESVVSIWVIQQVYMYFRGSGKADDMRRDAARGAMRAAI.

Over residues 1–10 (MGGRYDRNTF) the composition is skewed to basic and acidic residues. The segment at 1 to 66 (MGGRYDRNTF…GSGAQDLKKK (66 aa)) is disordered. Topologically, residues 1 to 126 (MGGRYDRNTF…EILVRLQRLQ (126 aa)) are cytoplasmic. The residue at position 34 (serine 34) is a Phosphoserine. A coiled-coil region spans residues 58-94 (SGAQDLKKKEKELQAKEADLRRREQDLKRKQDAAARA). 4 helical membrane passes run 127–147 (YIAFATYLGLVLALFWNIIAV), 159–179 (IWLLAVIYFISGVPGGYVLWY), 194–214 (FGWFFLFYMLHILFCLFAAVA), and 242–262 (IFYFIGFGLFCLESVVSIWVI). Over 263-288 (QQVYMYFRGSGKADDMRRDAARGAMR) the chain is Cytoplasmic.

Belongs to the SCAMP family.

It is found in the cell membrane. The protein resides in the cytoplasmic vesicle. Its subcellular location is the secretory vesicle membrane. Its function is as follows. Probably involved in membrane trafficking. The protein is Secretory carrier-associated membrane protein 5 (SCAMP5) of Arabidopsis thaliana (Mouse-ear cress).